We begin with the raw amino-acid sequence, 783 residues long: BMP/retinoic acid-inducible neural-specific protein 2 (783 aa).

The first 33 residues, 1-33 (MRWQCGTRFRGLRPVVAPWTALLALGLPGWVLA), serve as a signal peptide directing secretion. The region spanning 85–281 (RYRIYREFAR…FVAAALSYIT (197 aa)) is the MACPF domain. 6 N-linked (GlcNAc...) asparagine glycosylation sites follow: asparagine 185, asparagine 354, asparagine 473, asparagine 579, asparagine 626, and asparagine 658.

Belongs to the BRINP family.

The protein resides in the secreted. In terms of biological role, inhibits neuronal cell proliferation by negative regulation of the cell cycle transition. In Pongo abelii (Sumatran orangutan), this protein is BMP/retinoic acid-inducible neural-specific protein 2 (BRINP2).